Consider the following 163-residue polypeptide: ATP synthase subunit b (163 aa).

Residues 13–33 (SFILFVWFCMKYIWPPIIFAI) form a helical membrane-spanning segment.

The protein belongs to the ATPase B chain family. As to quaternary structure, F-type ATPases have 2 components, F(1) - the catalytic core - and F(0) - the membrane proton channel. F(1) has five subunits: alpha(3), beta(3), gamma(1), delta(1), epsilon(1). F(0) has three main subunits: a(1), b(2) and c(10-14). The alpha and beta chains form an alternating ring which encloses part of the gamma chain. F(1) is attached to F(0) by a central stalk formed by the gamma and epsilon chains, while a peripheral stalk is formed by the delta and b chains.

It is found in the cell membrane. Functionally, f(1)F(0) ATP synthase produces ATP from ADP in the presence of a proton or sodium gradient. F-type ATPases consist of two structural domains, F(1) containing the extramembraneous catalytic core and F(0) containing the membrane proton channel, linked together by a central stalk and a peripheral stalk. During catalysis, ATP synthesis in the catalytic domain of F(1) is coupled via a rotary mechanism of the central stalk subunits to proton translocation. In terms of biological role, component of the F(0) channel, it forms part of the peripheral stalk, linking F(1) to F(0). The protein is ATP synthase subunit b of Buchnera aphidicola subsp. Schizaphis graminum (strain Sg).